Reading from the N-terminus, the 464-residue chain is Gasdermin-A3 (464 aa).

Positions 1 to 261 (MPVFEDVTRA…EEPEEEKLIG (261 aa)) are triggers pyroptosis. 9 to 13 (RALVR) provides a ligand contact to a cardiolipin. The next 4 membrane-spanning stretches (beta stranded) occupy residues 78–95 (NFSFKNMLDVQVQGLVEV), 99–120 (VKVKGTAGLSQSSTLEVQTLSV), 164–180 (VTVEQTGNANAIFSLPS), and 184–198 (LGLQGSLNNNKAVTI). A coiled-coil region spans residues 255–327 (EEEKLIGEMH…DKGQKVTLEA (73 aa)).

Belongs to the gasdermin family. As to quaternary structure, homooligomer; homooligomeric ring-shaped pore complex containing 18-36 subunits when inserted in the membrane. In terms of processing, cleavage relieves autoinhibition by releasing the N-terminal moiety (Gasdermin-A3, N-terminal) that initiates pyroptosis. In contrast to Gsdma, not cleaved by bacterial effector protein SpeB. Palmitoylated. Highest levels in skin with weak expression in placenta and testis. Not detected in the gastrointestinal tract. In skin, expressed in postnatal hair follicles and epidermis as well as sebaceous gland basal cells.

It is found in the cytoplasm. The protein localises to the cytosol. It localises to the cell membrane. The protein resides in the mitochondrion membrane. Its activity is regulated as follows. The full-length protein before cleavage is inactive: intramolecular interactions between N- and C-terminal domains mediate autoinhibition in the absence of activation signal. The intrinsic pyroptosis-inducing activity is carried by the released N-terminal moiety (Gasdermin-A3, N-terminal). In terms of biological role, precursor of a pore-forming protein involved in the transition from catagen to telogen at the end of hair follicle morphogenesis. This form constitutes the precursor of the pore: upon cleavage, the released N-terminal moiety (Gasdermin-A3, N-terminal) binds to membranes and forms pores, triggering pyroptosis. This form acts as a sensor of infection: activation is triggered by cleavage by some bacterial effector protein, which releases the N-terminal moiety (Gasdermin-A3, N-terminal). Pore-forming protein that causes membrane permeabilization and pyroptosis. Released upon cleavage by some bacterial effector protein, and binds to membrane inner leaflet lipids. Homooligomerizes within the membrane and forms pores of 10-15 nanometers (nm) of inner diameter, allowing the release of mature interleukin-1 (IL1B and IL18) and triggering pyroptosis. Binds to membrane inner leaflet lipids, including bisphosphorylated phosphatidylinositols, such as phosphatidylinositol (4,5)-bisphosphate, as well as phosphatidylinositol (3,4,5)-bisphosphate, and more weakly to monophosphorylated phosphatidylinositols. Also binds to bacterial and mitochondrial lipids, including cardiolipin, and exhibits bactericidal activity. Plays a role in the transition from catagen to telogen at the end of hair follicle morphogenesis, possibly by regulating hair follicle stem cell niche maintenance. Also required for mammary gland development. This is Gasdermin-A3 from Mus musculus (Mouse).